Reading from the N-terminus, the 138-residue chain is Cysteine desulfuration protein SufE (138 aa).

The active-site Cysteine persulfide intermediate is Cys-51.

This sequence belongs to the SufE family. As to quaternary structure, homodimer. Interacts with SufS.

It is found in the cytoplasm. It participates in cofactor biosynthesis; iron-sulfur cluster biosynthesis. In terms of biological role, participates in cysteine desulfuration mediated by SufS. Cysteine desulfuration mobilizes sulfur from L-cysteine to yield L-alanine and constitutes an essential step in sulfur metabolism for biosynthesis of a variety of sulfur-containing biomolecules. Functions as a sulfur acceptor for SufS, by mediating the direct transfer of the sulfur atom from the S-sulfanylcysteine of SufS, an intermediate product of cysteine desulfuration process. The chain is Cysteine desulfuration protein SufE from Escherichia coli O157:H7.